The sequence spans 403 residues: 26S proteasome regulatory subunit 8 (403 aa).

186 to 193 (GPPGTGKT) contributes to the ATP binding site.

This sequence belongs to the AAA ATPase family.

Its subcellular location is the cytoplasm. It localises to the nucleus. Its function is as follows. The 26S proteasome is involved in the ATP-dependent degradation of ubiquitinated proteins. The regulatory (or ATPase) complex confers ATP dependency and substrate specificity to the 26S complex. The chain is 26S proteasome regulatory subunit 8 (psmC5) from Dictyostelium discoideum (Social amoeba).